The following is a 159-amino-acid chain: Transcriptional repressor NrdR (159 aa).

A zinc finger spans residues C3–C34. Positions P49–D139 constitute an ATP-cone domain.

Belongs to the NrdR family. It depends on Zn(2+) as a cofactor.

In terms of biological role, negatively regulates transcription of bacterial ribonucleotide reductase nrd genes and operons by binding to NrdR-boxes. The chain is Transcriptional repressor NrdR from Nitrosomonas europaea (strain ATCC 19718 / CIP 103999 / KCTC 2705 / NBRC 14298).